Here is a 118-residue protein sequence, read N- to C-terminus: UPF0449 protein C19orf25 (118 aa).

Y63 carries the post-translational modification Phosphotyrosine. Residues 81-109 (NVLRQRCELLQRAGEDLEREVAQMKQAAL) adopt a coiled-coil conformation.

The protein belongs to the UPF0449 family.

In Homo sapiens (Human), this protein is UPF0449 protein C19orf25 (C19orf25).